We begin with the raw amino-acid sequence, 373 residues long: Homoserine O-acetyltransferase (373 aa).

Residues 46 to 355 (NAILICHPLT…NPNGHDSFLL (310 aa)) enclose the AB hydrolase-1 domain. The active-site Nucleophile is the Ser-151. Substrate is bound at residue Arg-221. Residues Asp-317 and His-350 contribute to the active site. Asp-351 serves as a coordination point for substrate.

The protein belongs to the AB hydrolase superfamily. MetX family. Homodimer.

It is found in the cytoplasm. It carries out the reaction L-homoserine + acetyl-CoA = O-acetyl-L-homoserine + CoA. It participates in amino-acid biosynthesis; L-methionine biosynthesis via de novo pathway; O-acetyl-L-homoserine from L-homoserine: step 1/1. Transfers an acetyl group from acetyl-CoA to L-homoserine, forming acetyl-L-homoserine. The protein is Homoserine O-acetyltransferase of Zymomonas mobilis subsp. mobilis (strain ATCC 31821 / ZM4 / CP4).